A 368-amino-acid chain; its full sequence is Isopentenyl-diphosphate delta-isomerase (368 aa).

Residue 7 to 8 (RK) coordinates substrate. FMN contacts are provided by residues Thr65, 66-68 (GMT), Ser96, and Asn125. Substrate is bound at residue 96-98 (SQR). A substrate-binding site is contributed by Gln160. A Mg(2+)-binding site is contributed by Glu161. FMN is bound by residues Lys193, Ser218, Thr223, 275 to 277 (GIR), and 296 to 297 (AL).

Belongs to the IPP isomerase type 2 family. In terms of assembly, homooctamer. Dimer of tetramers. FMN serves as cofactor. Requires NADPH as cofactor. The cofactor is Mg(2+).

The protein resides in the cytoplasm. The catalysed reaction is isopentenyl diphosphate = dimethylallyl diphosphate. Its function is as follows. Involved in the biosynthesis of isoprenoids. Catalyzes the 1,3-allylic rearrangement of the homoallylic substrate isopentenyl (IPP) to its allylic isomer, dimethylallyl diphosphate (DMAPP). This Saccharolobus shibatae (strain ATCC 51178 / DSM 5389 / JCM 8931 / NBRC 15437 / B12) (Sulfolobus shibatae) protein is Isopentenyl-diphosphate delta-isomerase.